Reading from the N-terminus, the 688-residue chain is Hid-1 family protein P19A11.07c (688 aa).

The protein belongs to the hid-1 family.

The protein localises to the cytoplasm. Its subcellular location is the nucleus. In Schizosaccharomyces pombe (strain 972 / ATCC 24843) (Fission yeast), this protein is Hid-1 family protein P19A11.07c.